The primary structure comprises 375 residues: RING-H2 finger protein ATL16 (375 aa).

The segment at 1–20 is disordered; it reads MDLSNRRNPLRDLSFPPPPP. Residues 39–59 traverse the membrane as a helical segment; that stretch reads VAVIGILATAFLLVSYYVFVI. Residues 138-180 form an RING-type; atypical zinc finger; sequence CSVCLSEFQDEEKLRIIPNCSHLFHIDCIDVWLQNNANCPLCR. Disordered regions lie at residues 223 to 266 and 356 to 375; these read GSDR…DRGG and SFGSSRRSRSSSKLPLYFEP. Positions 238-257 are enriched in polar residues; the sequence is QERSNSGYLLNENTQNSISP.

Belongs to the RING-type zinc finger family. ATL subfamily.

Its subcellular location is the membrane. It carries out the reaction S-ubiquitinyl-[E2 ubiquitin-conjugating enzyme]-L-cysteine + [acceptor protein]-L-lysine = [E2 ubiquitin-conjugating enzyme]-L-cysteine + N(6)-ubiquitinyl-[acceptor protein]-L-lysine.. It participates in protein modification; protein ubiquitination. This chain is RING-H2 finger protein ATL16 (ATL16), found in Arabidopsis thaliana (Mouse-ear cress).